A 434-amino-acid chain; its full sequence is Protein TolB homolog (434 aa).

Positions methionine 1–alanine 27 are cleaved as a signal peptide. Residues serine 413–lysine 434 form a disordered region.

Belongs to the TolB family.

Its subcellular location is the periplasm. The polypeptide is Protein TolB homolog (Chlorobaculum tepidum (strain ATCC 49652 / DSM 12025 / NBRC 103806 / TLS) (Chlorobium tepidum)).